The sequence spans 150 residues: Monothiol glutaredoxin-5, mitochondrial (150 aa).

Residues 1 to 29 (MFLPKFNPIRSFSPILRAKTLLRYQNRMY) constitute a mitochondrion transit peptide. A Glutaredoxin domain is found at 35–140 (RKAIEDAIES…DLLEEAQALV (106 aa)). K52 contributes to the glutathione binding site. C60 is a binding site for [2Fe-2S] cluster. Residues 92–96 (REGIK), I104, and 117–118 (CD) contribute to the glutathione site.

The protein belongs to the glutaredoxin family. Monothiol subfamily. Homodimer. Interacts with SSQ1. Interacts with BOL1.

Its subcellular location is the mitochondrion matrix. Its function is as follows. Monothiol glutaredoxin involved in mitochondrial iron-sulfur (Fe/S) cluster transfer. Receives 2Fe/2S clusters from scaffold protein ISU1 and mediates their transfer to apoproteins, to the 4Fe/FS cluster biosynthesis machinery, or export from mitochondrion. This chain is Monothiol glutaredoxin-5, mitochondrial, found in Saccharomyces cerevisiae (strain ATCC 204508 / S288c) (Baker's yeast).